The chain runs to 225 residues: Cytidylate kinase (225 aa).

Residue 12-20 coordinates ATP; it reads GPSGAGKGT.

Belongs to the cytidylate kinase family. Type 1 subfamily.

The protein resides in the cytoplasm. It carries out the reaction CMP + ATP = CDP + ADP. The catalysed reaction is dCMP + ATP = dCDP + ADP. The polypeptide is Cytidylate kinase (Proteus mirabilis (strain HI4320)).